A 457-amino-acid chain; its full sequence is Bifunctional protein GlmU (457 aa).

Residues 1–232 form a pyrophosphorylase region; it reads MNNLAAVILA…PAEVMGINDR (232 aa). UDP-N-acetyl-alpha-D-glucosamine is bound by residues 9 to 12, lysine 23, glutamine 75, and 80 to 81; these read LAAG and GT. Aspartate 105 is a Mg(2+) binding site. Residues glycine 142, glutamate 157, asparagine 172, and asparagine 230 each coordinate UDP-N-acetyl-alpha-D-glucosamine. Asparagine 230 contributes to the Mg(2+) binding site. Residues 233–253 form a linker region; sequence AQLAEAGQLLRGRINKALMLD. An N-acetyltransferase region spans residues 254-457; sequence GTTLIDPQTT…NKEGWKLKKK (204 aa). UDP-N-acetyl-alpha-D-glucosamine-binding residues include arginine 336 and lysine 354. Histidine 366 (proton acceptor) is an active-site residue. UDP-N-acetyl-alpha-D-glucosamine-binding residues include tyrosine 369 and asparagine 380. Residues 389–390, serine 408, alanine 426, and arginine 443 each bind acetyl-CoA; that span reads NY.

It in the N-terminal section; belongs to the N-acetylglucosamine-1-phosphate uridyltransferase family. In the C-terminal section; belongs to the transferase hexapeptide repeat family. As to quaternary structure, homotrimer. Requires Mg(2+) as cofactor.

Its subcellular location is the cytoplasm. The catalysed reaction is alpha-D-glucosamine 1-phosphate + acetyl-CoA = N-acetyl-alpha-D-glucosamine 1-phosphate + CoA + H(+). The enzyme catalyses N-acetyl-alpha-D-glucosamine 1-phosphate + UTP + H(+) = UDP-N-acetyl-alpha-D-glucosamine + diphosphate. It functions in the pathway nucleotide-sugar biosynthesis; UDP-N-acetyl-alpha-D-glucosamine biosynthesis; N-acetyl-alpha-D-glucosamine 1-phosphate from alpha-D-glucosamine 6-phosphate (route II): step 2/2. The protein operates within nucleotide-sugar biosynthesis; UDP-N-acetyl-alpha-D-glucosamine biosynthesis; UDP-N-acetyl-alpha-D-glucosamine from N-acetyl-alpha-D-glucosamine 1-phosphate: step 1/1. Its pathway is bacterial outer membrane biogenesis; LPS lipid A biosynthesis. Its function is as follows. Catalyzes the last two sequential reactions in the de novo biosynthetic pathway for UDP-N-acetylglucosamine (UDP-GlcNAc). The C-terminal domain catalyzes the transfer of acetyl group from acetyl coenzyme A to glucosamine-1-phosphate (GlcN-1-P) to produce N-acetylglucosamine-1-phosphate (GlcNAc-1-P), which is converted into UDP-GlcNAc by the transfer of uridine 5-monophosphate (from uridine 5-triphosphate), a reaction catalyzed by the N-terminal domain. The chain is Bifunctional protein GlmU from Geotalea uraniireducens (strain Rf4) (Geobacter uraniireducens).